Here is a 473-residue protein sequence, read N- to C-terminus: tRNA-2-methylthio-N(6)-dimethylallyladenosine synthase (473 aa).

An MTTase N-terminal domain is found at 5–125 (RKLHIKSYGC…LPQLLARAKA (121 aa)). 6 residues coordinate [4Fe-4S] cluster: C14, C50, C88, C166, C170, and C173. Residues 152–384 (RARGISAFVT…QNLIDSQQSA (233 aa)) enclose the Radical SAM core domain. The TRAM domain maps to 387–449 (RAAVGTTVDV…RYSLLGSLAS (63 aa)). Over residues 453–462 (SRASADDAPP) the composition is skewed to low complexity. Residues 453–473 (SRASADDAPPVGASSPAIMGV) form a disordered region.

This sequence belongs to the methylthiotransferase family. MiaB subfamily. In terms of assembly, monomer. The cofactor is [4Fe-4S] cluster.

The protein localises to the cytoplasm. The catalysed reaction is N(6)-dimethylallyladenosine(37) in tRNA + (sulfur carrier)-SH + AH2 + 2 S-adenosyl-L-methionine = 2-methylsulfanyl-N(6)-dimethylallyladenosine(37) in tRNA + (sulfur carrier)-H + 5'-deoxyadenosine + L-methionine + A + S-adenosyl-L-homocysteine + 2 H(+). Catalyzes the methylthiolation of N6-(dimethylallyl)adenosine (i(6)A), leading to the formation of 2-methylthio-N6-(dimethylallyl)adenosine (ms(2)i(6)A) at position 37 in tRNAs that read codons beginning with uridine. This is tRNA-2-methylthio-N(6)-dimethylallyladenosine synthase from Nitrobacter hamburgensis (strain DSM 10229 / NCIMB 13809 / X14).